Reading from the N-terminus, the 212-residue chain is MFDKNNLKLYFICGTQDIESKTTIIDVVTEALESGITMFQFREKGNGALIGDEKEDLARKLLALCHDYAVPFIVNDDVALANKIGADGIHVGQDDMDVKVFAEQFKGKIIGLSISNIDEYKTSNLAHVDYIGVGPMYATTSKDDANLPVGPEMITKLRAHVNHFPIVAIGGINVENTREVMQAGADGISIISAITKSENISNTISQFLQNVE.

4-amino-2-methyl-5-(diphosphooxymethyl)pyrimidine is bound by residues 40–44 (QFREK) and Asn-75. The Mg(2+) site is built by Asp-76 and Asp-95. Ser-113 contacts 4-amino-2-methyl-5-(diphosphooxymethyl)pyrimidine. 139–141 (TTS) is a binding site for 2-[(2R,5Z)-2-carboxy-4-methylthiazol-5(2H)-ylidene]ethyl phosphate. Residue Lys-142 coordinates 4-amino-2-methyl-5-(diphosphooxymethyl)pyrimidine. Residues Gly-171 and 191 to 192 (IS) each bind 2-[(2R,5Z)-2-carboxy-4-methylthiazol-5(2H)-ylidene]ethyl phosphate.

It belongs to the thiamine-phosphate synthase family. Requires Mg(2+) as cofactor.

The catalysed reaction is 2-[(2R,5Z)-2-carboxy-4-methylthiazol-5(2H)-ylidene]ethyl phosphate + 4-amino-2-methyl-5-(diphosphooxymethyl)pyrimidine + 2 H(+) = thiamine phosphate + CO2 + diphosphate. It carries out the reaction 2-(2-carboxy-4-methylthiazol-5-yl)ethyl phosphate + 4-amino-2-methyl-5-(diphosphooxymethyl)pyrimidine + 2 H(+) = thiamine phosphate + CO2 + diphosphate. It catalyses the reaction 4-methyl-5-(2-phosphooxyethyl)-thiazole + 4-amino-2-methyl-5-(diphosphooxymethyl)pyrimidine + H(+) = thiamine phosphate + diphosphate. The protein operates within cofactor biosynthesis; thiamine diphosphate biosynthesis; thiamine phosphate from 4-amino-2-methyl-5-diphosphomethylpyrimidine and 4-methyl-5-(2-phosphoethyl)-thiazole: step 1/1. Functionally, condenses 4-methyl-5-(beta-hydroxyethyl)thiazole monophosphate (THZ-P) and 2-methyl-4-amino-5-hydroxymethyl pyrimidine pyrophosphate (HMP-PP) to form thiamine monophosphate (TMP). The protein is Thiamine-phosphate synthase of Staphylococcus saprophyticus subsp. saprophyticus (strain ATCC 15305 / DSM 20229 / NCIMB 8711 / NCTC 7292 / S-41).